The sequence spans 2135 residues: MSHCLRASPFLSPPPPLLHPSRRRRHRQGGCIHTSPGTRPLVARARFDPPPLLRLKVSDSSDCPAPHHPHSQHQPLLPTRRQQQQPPPPYQALVASLAPLWREGLFLVRCSVFAAALSVAAALSWYAQLRARSFVESRLLPAACAALGEFLQREVHLGRVRSVSPLGITLHTCSIGPHAEEFSCAEVPVMKIRVRPFASLRRGRVVVDAVLSEPSALVAQRKDFSWLGLPAPSEGSPKRHSGEEGIDYRTKTRRLAREKAAEQWNEERDKAAREAAEMGYIVPSAQSISPSIDEMMEDDGPVDTGKSSPHLCPDEMHRKDHHIDAGIDSSSKHADLEKSFGVKARIPGISFWSRMIPNPSRRRYRRKAHSKLISDTDNSSQQRILRRSAYAAVAYFQNECSGNPDDSLPGPGESSSDGGHTNGGGEEGSPNDGPTEYSETTSMDYGELPPEKSNFASTMLIGNTDVLNGSSHNQQPSQISSHSWENNEQVSEAPVLKKRKNISEDDYRQEFDFGAFGSCTYAHNWLSFWPFQLKGFPVGFNAPSASLNVQIQKLRSLFAIGPGDNSAELSQGVGQIHPGAVQQTLPITLDSVYFNGGNLMLLGYGDQEPREMKHANGHIKFKNSYNRVHVHVTGNCMEWRQDRTSQGGGYLSTDVFVDIAEQTWHANLNVVNAFAPLFERILEIPVVWNKGRATGEVHLCMSKGDSFPSIHGQLDVKGLAFQILDAPSSFSDIVATLSFRGQRVFLHNASGWFGDAPVEASGDFGLNPEDGEFHLMCQVPSVEVNALMKTMKMRPLMFPLAGAVTAVFNCQGPLDAPVFVGSGIVSRKSLSVSGMLPSAASEAVMQNKESGAVAAFDHIPFTHVSANFTFNLDNCVADLYGIRACLLDGGEIRGAGNVWICPEGEGDDSAMDINLSGSILLDKVLHRYIPGGIQLIPLKIGELNGETRLSGSLIRPKFDIKWAAPNAEDSFSDARGNIVIAHDYIMVNSSSVSFDLNTHIQTSYIDDYLLHKEMYQRKKIMPLIVEGVDLDLRMRGFEFAHIASSIPFDSPRPLHLKASGRFKFQGKVVKYSQLVDEKNHGAIQGTIDQSKLENDVSRLVGEISLSGIKLNQLMLAPQSTGFLSISPDSIMLNATGRPDENFSIEVNVPLFFGTHEAIQDGRLLSIFLQKGQLRSNICYHPENLTSLEVRNLPLDELEFASLRGFVQKAELQLNFQKRRGHGLLSVIRPKFSGMLGESLDIAARWSGDVITMEKSVLEQANSKYELQGEYVFPGTRDRFPMESQSNGFIEKAMGGHLGSMMSSMGRWRMRLEVPGAEVAEMLPLARLLSRSTDPAIRSRSKELFMQTLHSVGFNAESLRDQLKALEMYPDWLDDDTIEDITLPGLAELRGYWRGSLDASGGGNGDTMADFDFNGEDWEWGTYKTQRVLASGSFSNNDGLRLDKLFIQKDNATLHADGSILGPLTNLHFAVLNFPVGLIPALVQAIESSTTDSIHFLRQWLTPIKGILHMEGDLRGTLAKPECDVQIRLLDGTIGGIDLGRAEVLASVTPTSRFVFDANFEPTIQSGHVNIQGSVPVTYVDSNSIEEDLEGGDGKQGIIRIPVWAKDRGLTNDISETRIMRDKPDEGWEFQLAESLKGLSWNMLEPGEVRINADIKDGGMTLITALSPYSNWLQGYAEVLLQVKGTVDHPVVDGSASFHRATVASPFLRTPLTNFAGNVHVISNRLCISSMESRVGRKGRLSMKGTLPLHNIEPSANDKIELKCEVLDIRAKNILSGQVDSQLQVTGSILRPDVSGMIRLSHGEAYLPHDKGNGAVATRLSSNKSISVPAGFDQRTVSRDVSHFLGSLSTSPDGQQSETERTPEHGSFKPNIDARLNDLKLTFGPELRIVYPLILNFAVSGDLELNGMVHPKYIRPKGVLTFENGEVNLVATQVRLKNDHLNVAKFEPDLGLDPILDLVLVGSEWQFKIQSRASMWQDNLVVTSTRSVDQDVLSPSEAAKVFESQLAESLLEGDGQLAFKKLATATLETLMPRIEGKGEFGQARWRLVYAPQIPSLLSVDPTVDPLKSLANNISFATEVEVQLGKRLQASVVRQMKDSEMAMQWSLIYQLTSRLRVLFQSTPSNRLLFEYSATSQG.

Low complexity-rich tracts occupy residues 1–10 (MSHCLRASPF) and 72–84 (QHQP…RQQQ). Residues 1–42 (MSHCLRASPFLSPPPPLLHPSRRRRHRQGGCIHTSPGTRPLV) constitute a chloroplast transit peptide. 2 disordered regions span residues 1–44 (MSHC…LVAR) and 58–89 (SDSS…PPPP). The Stromal portion of the chain corresponds to 43-104 (ARARFDPPPL…ASLAPLWREG (62 aa)). The helical transmembrane segment at 105–125 (LFLVRCSVFAAALSVAAALSW) threads the bilayer. The Chloroplast intermembrane portion of the chain corresponds to 126–2135 (YAQLRARSFV…LFEYSATSQG (2010 aa)). Residues 361-370 (RRRYRRKAHS) are compositionally biased toward basic residues. 3 disordered regions span residues 361–382 (RRRY…SSQQ), 401–492 (SGNP…QVSE), and 1843–1869 (FLGS…SFKP). Composition is skewed to polar residues over residues 373–382 (ISDTDNSSQQ), 454–490 (NFAS…NEQV), and 1846–1856 (SLSTSPDGQQS). A compositionally biased stretch (basic and acidic residues) spans 1857–1866 (ETERTPEHGS).

It belongs to the TamB family. In terms of assembly, part of the TIC complex, which can interact with components of the TOC complex to form a larger import complex. As to expression, highly expressed in third leaf and developing seeds. Expressed in anthers, pistils, flag leaves and young panicles.

Its subcellular location is the plastid. It is found in the chloroplast inner membrane. The protein resides in the chloroplast intermembrane space. It localises to the chloroplast. The protein localises to the amyloplast. Functionally, part of the inner chloroplast membrane translocon complex (TIC) which associates with the outer chloroplast membrane translocon complex (TOC) and forms a supercomplex involved in protein precursor import into the chloroplast stroma. Required for the regulation of starch granule size in amyloplasts. This is Protein SUBSTANDARD STARCH GRAIN 4, chloroplastic from Oryza sativa subsp. japonica (Rice).